The sequence spans 330 residues: Src kinase-associated phosphoprotein 2-A (330 aa).

Residues 53–77 are disordered; the sequence is QDFQDKAETDDQEENDGFSLPPDAV. The region spanning 105-208 is the PH domain; that stretch reads DYLRAGYLEK…WINVIMNARG (104 aa). The disordered stretch occupies residues 228-261; it reads SHEEDIYEELPEESEKPVTGSETPKATPVPVNNT. Residues 247-261 are compositionally biased toward polar residues; it reads GSETPKATPVPVNNT. Residues 268-329 form the SH3 domain; the sequence is DYANFYRGLW…PKAYIIEMYD (62 aa).

It belongs to the SKAP family. Post-translationally, phosphorylated on tyrosines.

It is found in the cytoplasm. In terms of biological role, may be involved in B-cell and macrophage adhesion processes. May play a role in src signaling pathway. The protein is Src kinase-associated phosphoprotein 2-A (skap2-a) of Xenopus laevis (African clawed frog).